The sequence spans 149 residues: Alpha-crystallin A chain (149 aa).

Residues L28–S138 enclose the sHSP domain. 6 residues coordinate Zn(2+): H55, H76, E78, H83, H91, and H130. Residues N125 to S149 are disordered. The span at H130–P143 shows a compositional bias: basic and acidic residues. S138 carries O-linked (GlcNAc) serine glycosylation.

This sequence belongs to the small heat shock protein (HSP20) family. Heteropolymer composed of three CRYAA and one CRYAB subunits. Inter-subunit bridging via zinc ions enhances stability, which is crucial as there is no protein turn over in the lens. Can also form homodimers and homotetramers (dimers of dimers) which serve as the building blocks of homooligomers. Within homooligomers, the zinc-binding motif is created from residues of 3 different molecules. His-76 and Glu-78 from one molecule are ligands of the zinc ion, and His-83 and His-130 residues from additional molecules complete the site with tetrahedral coordination geometry.

The protein resides in the cytoplasm. It localises to the nucleus. Contributes to the transparency and refractive index of the lens. May act as a chaperone, preventing aggregation of various proteins under a wide range of stress conditions. The protein is Alpha-crystallin A chain (CRYAA) of Rana temporaria (European common frog).